Reading from the N-terminus, the 398-residue chain is Cation channel sperm-associated protein 3 (398 aa).

Residues 1–48 lie on the Cytoplasmic side of the membrane; sequence MSQHRHQRHSRVISSSPVDTTSVGFCPTFKKFKRNDDECRAFVKRVIM. A helical membrane pass occupies residues 49 to 71; that stretch reads SRFFKIIMISTVTSNAFFMALWT. Topologically, residues 72–80 are extracellular; the sequence is SYDIRYRLF. Residues 81-107 form a helical membrane-spanning segment; it reads RLLEFSEIFFVSICTSELSMKVYVDPI. Asn108 is a topological domain (cytoplasmic). A helical transmembrane segment spans residues 109–131; it reads YWKNGYNLLDVIIIIVMFLPYAL. Topologically, residues 132–143 are extracellular; sequence RQLMGKQFTYLY. Residues 144-160 form a helical membrane-spanning segment; it reads IADGMQSLRILKLIGYS. The Cytoplasmic portion of the chain corresponds to 161–168; sequence QGIRTLIT. The helical transmembrane segment at 169–195 threads the bilayer; the sequence is AVGQTVYTVASVLLLLFLLMYIFAILG. Residues 196-216 lie on the Extracellular side of the membrane; sequence FCLFGSPDNGDHDNWGNLAAA. Positions 217-236 form an intramembrane region, helical; Pore-forming; the sequence is FFTLFSLATVDGWTDLQKQL. Residues 237–242 lie on the Extracellular side of the membrane; that stretch reads DNREFA. The chain crosses the membrane as a helical span at residues 243–268; it reads LSRAFTIIFILLASFIFLNMFVGVMI. The Cytoplasmic segment spans residues 269–398; sequence MHTEDSIRKF…PQSLEKVDEK (130 aa).

Belongs to the cation channel sperm-associated (TC 1.A.1.19) family. As to quaternary structure, component of the CatSper complex or CatSpermasome composed of the core pore-forming members CATSPER1, CATSPER2, CATSPER3 and CATSPER4 as well as auxiliary members CATSPERB, CATSPERG, CATSPERD, CATSPERE, CATSPERZ, C2CD6/CATSPERT, TMEM249, TMEM262 and EFCAB9. HSPA1 may be an additional auxiliary complex member. The core complex members CATSPER1, CATSPER2, CATSPER3 and CATSPER4 form a heterotetrameric channel. The auxiliary CATSPERB, CATSPERG, CATSPERD and CATSPERE subunits form a pavilion-like structure over the pore which stabilizes the complex through interactions with CATSPER4, CATSPER3, CATSPER1 and CATSPER2 respectively. TMEM262/CATSPERH interacts with CATSPERB, further stabilizing the complex. C2CD6/CATSPERT interacts at least with CATSPERD and is required for targeting the CatSper complex in the flagellar membrane. As to expression, testis-specific.

It localises to the cell projection. It is found in the cilium. The protein resides in the flagellum membrane. The enzyme catalyses Ca(2+)(in) = Ca(2+)(out). With respect to regulation, the CatSper calcium channel is indirectly activated by extracellular progesterone and prostaglandins following the sequence: progesterone &gt; PGF1-alpha = PGE1 &gt; PGA1 &gt; PGE2 &gt;&gt; PGD2. The CatSper calcium channel is directly inhibited by endocannabinoid 2-arachidonoylglycerol (2AG). Indirect activation by progesterone takes place via the following mechanism: progesterone binds and activates the acylglycerol lipase ABHD2, which in turn mediates hydrolysis of 2AG inhibitor, relieving inhibition of the CatSper channel. The primary effect of progesterone activation is to shift voltage dependence towards more physiological, negative membrane potentials; it is not mediated by metabotropic receptors and second messengers. Sperm capacitation enhances the effect of progesterone by providing additional negative shift. Also activated by the elevation of intracellular pH. Pore-forming subunit of the CatSper complex, a sperm-specific voltage-gated calcium channel that plays a central role in calcium-dependent physiological responses essential for successful fertilization, such as sperm hyperactivation, acrosome reaction and chemotaxis towards the oocyte. This chain is Cation channel sperm-associated protein 3 (CATSPER3), found in Homo sapiens (Human).